The chain runs to 399 residues: Peroxisome assembly protein 12 (399 aa).

The segment at 1–24 is disordered; sequence MSFYSNLPSAGQSSRGSSTSGRNG. The Peroxisomal matrix portion of the chain corresponds to 1 to 33; it reads MSFYSNLPSAGQSSRGSSTSGRNGVGLEPLYPT. Positions 9 to 24 are enriched in low complexity; sequence SAGQSSRGSSTSGRNG. Residues 34 to 62 traverse the membrane as a helical segment; that stretch reads IFEIMSSQEIDSLLPASIRYLLANHLVAN. The Cytoplasmic portion of the chain corresponds to 63-67; the sequence is FPNRY. Residues 68–92 traverse the membrane as a helical segment; the sequence is TLRLNKYFFEWFQAIKGFVEWYHLK. Over 93 to 136 the chain is Peroxisomal matrix; the sequence is TYNSTFIDRFYGLQLFSSRDRNLALTQCLNPKGQSEWPQGLQLN. A helical transmembrane segment spans residues 137-168; that stretch reads QQQKSVIFLEKIILPYITAKLDEILEKISMNN. Over 169 to 171 the chain is Cytoplasmic; that stretch reads IFS. Residues 172-208 form a helical membrane-spanning segment; sequence SDETENKWPKRAFLRIYPFIKKLLALSNLLVKLLFLT. The Peroxisomal matrix segment spans residues 209–277; the sequence is KRTGSVSLLQ…PRFLTFMGSQ (69 aa). The chain crosses the membrane as a helical span at residues 278–305; the sequence is FFPTFIFVLRVYQWWTTQDMTTKLQKRV. Residues 306–399 are Cytoplasmic-facing; sequence NDLDEDIPRP…VVTGIRKLLI (94 aa). Positions 334, 337, 354, and 357 each coordinate Zn(2+). The RING-type; degenerate zinc-finger motif lies at 334–373; sequence CPVCEKTVQNPCVLETGYVACYPCAISYLVNNEGHCPVTN.

It belongs to the pex2/pex10/pex12 family. Component of the PEX2-PEX10-PEX12 retrotranslocation channel, composed of PEX2, PEX10 and PEX12.

The protein resides in the peroxisome membrane. Its pathway is protein modification; protein ubiquitination. Its function is as follows. Component of a retrotranslocation channel required for peroxisome organization by mediating export of the PEX5 receptor from peroxisomes to the cytosol, thereby promoting PEX5 recycling. The retrotranslocation channel is composed of PEX2, PEX10 and PEX12; each subunit contributing transmembrane segments that coassemble into an open channel that specifically allows the passage of PEX5 through the peroxisomal membrane. PEX12 also regulates PEX5 recycling by activating the E3 ubiquitin-protein ligase activity of PEX10. When PEX5 recycling is compromised, PEX12 stimulates PEX10-mediated polyubiquitination of PEX5, leading to its subsequent degradation. This is Peroxisome assembly protein 12 from Saccharomyces cerevisiae (strain ATCC 204508 / S288c) (Baker's yeast).